The following is a 187-amino-acid chain: Oleosin Zm-II (187 aa).

The residue at position 2 (alanine 2) is an N-acetylalanine. Residues 2 to 51 form a polar region; it reads ADRDRSGIYGGAHATYGQQQQQGGGGRPMGEQVKKGMLHDKGPTASQALT. The interval 17 to 42 is disordered; sequence YGQQQQQGGGGRPMGEQVKKGMLHDK. Basic and acidic residues predominate over residues 33–42; sequence QVKKGMLHDK. Transmembrane regions (helical) follow at residues 50 to 70, 83 to 103, and 104 to 124; these read LTVATLFPLGGLLLVLSGLAL, VFLIFSPVLVPAALLIGTAVM, and GFLTSGALGLGGLSSLTCLAN. The tract at residues 52-123 is hydrophobic; it reads VATLFPLGGL…GGLSSLTCLA (72 aa). A compositionally biased stretch (low complexity) spans 155-169; that stretch reads TAQAGQAIQGRAQEA. A disordered region spans residues 155–187; that stretch reads TAQAGQAIQGRAQEAGTGGGAGAGAGGGGRASS. The span at 170-187 shows a compositional bias: gly residues; that stretch reads GTGGGAGAGAGGGGRASS.

Belongs to the oleosin family. Post-translationally, the N-terminus is blocked. In terms of tissue distribution, found in embryonic axis, scutellum, and aleurone layer.

It is found in the lipid droplet. The protein resides in the membrane. Functionally, may have a structural role to stabilize the lipid body during desiccation of the seed by preventing coalescence of the oil. Probably interacts with both lipid and phospholipid moieties of lipid bodies. May also provide recognition signals for specific lipase anchorage in lipolysis during seedling growth. This is Oleosin Zm-II (OLE18) from Zea mays (Maize).